Consider the following 201-residue polypeptide: Anthranilate synthase component 2 (201 aa).

A Glutamine amidotransferase type-1 domain is found at 3-196; the sequence is NILFIDNFDS…IDWALSSTPA (194 aa). 57–59 provides a ligand contact to L-glutamine; sequence GPG. Cys84 (nucleophile; for GATase activity) is an active-site residue. Residues Gln88 and 134–135 each bind L-glutamine; that span reads SL. Active-site for GATase activity residues include His170 and Glu172.

As to quaternary structure, heterotetramer consisting of two non-identical subunits: a beta subunit (TrpG) and a large alpha subunit (TrpE).

The catalysed reaction is chorismate + L-glutamine = anthranilate + pyruvate + L-glutamate + H(+). It participates in amino-acid biosynthesis; L-tryptophan biosynthesis; L-tryptophan from chorismate: step 1/5. Functionally, part of a heterotetrameric complex that catalyzes the two-step biosynthesis of anthranilate, an intermediate in the biosynthesis of L-tryptophan. In the first step, the glutamine-binding beta subunit (TrpG) of anthranilate synthase (AS) provides the glutamine amidotransferase activity which generates ammonia as a substrate that, along with chorismate, is used in the second step, catalyzed by the large alpha subunit of AS (TrpE) to produce anthranilate. In the absence of TrpG, TrpE can synthesize anthranilate directly from chorismate and high concentrations of ammonia. This chain is Anthranilate synthase component 2 (trpG), found in Vibrio cholerae serotype O1 (strain ATCC 39315 / El Tor Inaba N16961).